Here is a 1106-residue protein sequence, read N- to C-terminus: MPKREDLKSVLVIGSGPIVIGQAAEFDYSGTQALRVLKEEGLRVILVNSNPATIMTDPEFADATYVEPITPEVVEKIIAKERPDALLPTLGGQTALNTAIALDKNGVLAKYNVELIGANIAAIELGEDREKFKGVVERCGAESARSHIVHAMDEALVAAADLGYPLVVRPSFTMGGLGSGLAYNEKDLHRIAGAGLQYSPTSEVLLEESILGWKEYELEMMRDKNDNVVVVCSIENFDPVGVHTGDSITVAPAMTLTDREYQNLRDISIAVIREVGVDTGGCNIQFAIEPDTGRVVVIEMNPRVSRSSALASKATGFAIAKIATKLSLGYTLDEIPNDITQKTPASFEPTLDYVVVKVPRFAFEKFPAADPTLTTTMKSVGEAMAIGRNFTEALQKALRSLEQKGSQLDFGSVNALDVPELIEAAKRPTTDRLGQVQRALAGGASVEDLYAATGIDPWFLEQLQLLNEVAVELKQAPQLHESLLRKAKRHGFSDEQIAGLTNNAEAVVRGVRQALGIRPVYKTVDTCAAEFAAYTPYHYSSYDQEDEIALHEKPSVIILGSGPNRIGQGIEFDYSCVHASMALRKAGYETVMVNCNPETVSTDYDVSTRLYFEPLTLEDVLEVIAAEERTGGVMGVFVQLGGQTPLKLAQDLADAGVPILGTPPEAIDLAEHRGQFARVLDIAGLIAPKNGAAVSFEDAKRVADEIGYPVLVRPSYVLGGRGMEIVYDEPNLLRYITNATEITPDHPVLIDRFLEDAIEIDVDALYDGKELYLGGVMEHIEEAGIHSGDSACVLPPITLGQGVVDRVRDATQAIAEGVGVRGLINIQFALASDVLYVLEANPRASRTVPFVSKATGVQLAKAAALIGTGVTINQLRTAYKMIPSLPGTPGGFDGGSLPVGAPVAVKEAVLPFSRFRTPEGAVVDSLLGPEMRSTGEVMGIDKHFDTAFAKSQAAANNALPTEGKVFVSVANRDKRAVIMAVKLLADLGFEIVSTGGTADVLRRNGIQSSTVRKVAEGTSAEGEGTITDLIIAGEIDMVFNTPSGGEARGDGYEIRAAAISIGIPCITTVAEFNVAVLAIEAMRSFEWNVTSLQEHAEALLEAAANV.

Positions 1–402 (MPKREDLKSV…ALQKALRSLE (402 aa)) are carboxyphosphate synthetic domain. ATP contacts are provided by R129, R169, G175, G176, E208, I210, E215, G241, V242, H243, Q285, and E299. Residues 133–328 (KGVVERCGAE…IAKIATKLSL (196 aa)) enclose the ATP-grasp 1 domain. 3 residues coordinate Mg(2+): Q285, E299, and N301. Mn(2+) is bound by residues Q285, E299, and N301. Residues 403–546 (QKGSQLDFGS…YHYSSYDQED (144 aa)) form an oligomerization domain region. Residues 547 to 956 (EIALHEKPSV…AFAKSQAAAN (410 aa)) form a carbamoyl phosphate synthetic domain region. In terms of domain architecture, ATP-grasp 2 spans 677–868 (ARVLDIAGLI…LAKAAALIGT (192 aa)). The ATP site is built by R713, R752, L754, E759, G784, I785, H786, S787, Q827, and E839. 3 residues coordinate Mg(2+): Q827, E839, and N841. Residues Q827, E839, and N841 each coordinate Mn(2+). In terms of domain architecture, MGS-like spans 957 to 1106 (NALPTEGKVF…EALLEAAANV (150 aa)). The allosteric domain stretch occupies residues 957–1106 (NALPTEGKVF…EALLEAAANV (150 aa)).

Belongs to the CarB family. As to quaternary structure, composed of two chains; the small (or glutamine) chain promotes the hydrolysis of glutamine to ammonia, which is used by the large (or ammonia) chain to synthesize carbamoyl phosphate. Tetramer of heterodimers (alpha,beta)4. Mg(2+) is required as a cofactor. The cofactor is Mn(2+).

The enzyme catalyses hydrogencarbonate + L-glutamine + 2 ATP + H2O = carbamoyl phosphate + L-glutamate + 2 ADP + phosphate + 2 H(+). It carries out the reaction hydrogencarbonate + NH4(+) + 2 ATP = carbamoyl phosphate + 2 ADP + phosphate + 2 H(+). It participates in amino-acid biosynthesis; L-arginine biosynthesis; carbamoyl phosphate from bicarbonate: step 1/1. Its pathway is pyrimidine metabolism; UMP biosynthesis via de novo pathway; (S)-dihydroorotate from bicarbonate: step 1/3. Large subunit of the glutamine-dependent carbamoyl phosphate synthetase (CPSase). CPSase catalyzes the formation of carbamoyl phosphate from the ammonia moiety of glutamine, carbonate, and phosphate donated by ATP, constituting the first step of 2 biosynthetic pathways, one leading to arginine and/or urea and the other to pyrimidine nucleotides. The large subunit (synthetase) binds the substrates ammonia (free or transferred from glutamine from the small subunit), hydrogencarbonate and ATP and carries out an ATP-coupled ligase reaction, activating hydrogencarbonate by forming carboxy phosphate which reacts with ammonia to form carbamoyl phosphate. In Renibacterium salmoninarum (strain ATCC 33209 / DSM 20767 / JCM 11484 / NBRC 15589 / NCIMB 2235), this protein is Carbamoyl phosphate synthase large chain.